Consider the following 292-residue polypeptide: Ribosome-inactivating protein saporin-2 (292 aa).

The first 24 residues, 1 to 24 (MKIYVVATIAWILLQFSAWTTTDA), serve as a signal peptide directing secretion. Glu-200 is a catalytic residue.

It belongs to the ribosome-inactivating protein family. Type 1 RIP subfamily.

It catalyses the reaction Endohydrolysis of the N-glycosidic bond at one specific adenosine on the 28S rRNA.. In terms of biological role, ribosome-inactivating protein of type 1, inhibits protein synthesis in animal cells. Useful as immunotoxin for pharmacological applications. In Saponaria officinalis (Common soapwort), this protein is Ribosome-inactivating protein saporin-2 (SAP2).